The following is a 382-amino-acid chain: Protein RecA (382 aa).

79–86 (GPESSGKT) is a binding site for ATP. Positions 362–382 (ATKSAAKGSEVQADVKTKGAA) are disordered.

The protein belongs to the RecA family.

Its subcellular location is the cytoplasm. Functionally, can catalyze the hydrolysis of ATP in the presence of single-stranded DNA, the ATP-dependent uptake of single-stranded DNA by duplex DNA, and the ATP-dependent hybridization of homologous single-stranded DNAs. It interacts with LexA causing its activation and leading to its autocatalytic cleavage. This Synechococcus sp. (strain WH7803) protein is Protein RecA.